A 342-amino-acid chain; its full sequence is Protein RecA 1 (342 aa).

68 to 75 (GNESSGKT) contributes to the ATP binding site.

Belongs to the RecA family.

It is found in the cytoplasm. Can catalyze the hydrolysis of ATP in the presence of single-stranded DNA, the ATP-dependent uptake of single-stranded DNA by duplex DNA, and the ATP-dependent hybridization of homologous single-stranded DNAs. It interacts with LexA causing its activation and leading to its autocatalytic cleavage. This is Protein RecA 1 from Myxococcus xanthus.